Here is a 369-residue protein sequence, read N- to C-terminus: Core histone macro-H2A.1 (369 aa).

N6-lactoyllysine; alternate is present on residues K7 and K9. The 76-residue stretch at 15–90 (RSAKAGVIFP…ILLAVANDEE (76 aa)) folds into the Histone H2A domain. Position 18 is an N6-methyllysine (K18). Residue K116 is modified to N6-acetyllysine; alternate. Residue K116 forms a Glycyl lysine isopeptide (Lys-Gly) (interchain with G-Cter in ubiquitin); alternate linkage. Residue K117 forms a Glycyl lysine isopeptide (Lys-Gly) (interchain with G-Cter in ubiquitin) linkage. The residue at position 123 (K123) is an N6-acetyllysine; alternate. K123 carries the post-translational modification N6,N6-dimethyllysine; alternate. K123 is covalently cross-linked (Glycyl lysine isopeptide (Lys-Gly) (interchain with G-Cter in SUMO2); alternate). Positions 128–180 (ITPPPAKKAKSPSQKKTVSKKTGGKKGARKSKKKQGEVSKSASADSTTEGTPA) are disordered. Position 129 is a phosphothreonine (T129). The span at 144–160 (TVSKKTGGKKGARKSKK) shows a compositional bias: basic residues. Positions 165-177 (VSKSASADSTTEG) are enriched in polar residues. K167 is covalently cross-linked (Glycyl lysine isopeptide (Lys-Gly) (interchain with G-Cter in SUMO2)). 2 positions are modified to phosphoserine: S170 and S173. At T178 the chain carries Phosphothreonine. The Macro domain occupies 184 to 367 (TVLSTKSLFL…IYVQEMAKLD (184 aa)). K189 participates in a covalent cross-link: Glycyl lysine isopeptide (Lys-Gly) (interchain with G-Cter in SUMO2). A glycoprotein contacts are provided by D203, I204, V226, S275, G312, S313, G314, and N316. K320 is covalently cross-linked (Glycyl lysine isopeptide (Lys-Gly) (interchain with G-Cter in SUMO2)).

It belongs to the histone H2A family. In terms of assembly, the nucleosome is a histone octamer containing two molecules each of H2A, H2B, H3 and H4 assembled in one H3-H4 heterotetramer and two H2A-H2B heterodimers. ADP-ribosylated. In terms of processing, monoubiquitinated at either Lys-116 or Lys-117. May also be polyubiquitinated. Ubiquitination is mediated by the CUL3/SPOP E3 complex and does not promote proteasomal degradation. Instead, it is required for enrichment in inactive X chromosome chromatin. As to expression, present in liver (at protein level).

Its subcellular location is the nucleus. The protein resides in the chromosome. Its function is as follows. Variant histone H2A which replaces conventional H2A in a subset of nucleosomes where it represses transcription. Nucleosomes wrap and compact DNA into chromatin, limiting DNA accessibility to the cellular machineries which require DNA as a template. Histones thereby play a central role in transcription regulation, DNA repair, DNA replication and chromosomal stability. DNA accessibility is regulated via a complex set of post-translational modifications of histones, also called histone code, and nucleosome remodeling. Isoform that specifically binds poly-ADP-ribose and O-acetyl-ADP-ribose and plays a key role in NAD(+) metabolism. Able to bind to the ends of poly-ADP-ribose chains created by PARP1 and cap them. This prevents PARP1 from further addition of ADP-ribose and thus limits the consumption of nuclear NAD(+), allowing the cell to maintain proper NAD(+) levels in both the nucleus and the mitochondria to promote proper mitochondrial respiration. Functionally, in contrast to isoform 1, does not bind poly-ADP-ribose. This Gallus gallus (Chicken) protein is Core histone macro-H2A.1.